Consider the following 212-residue polypeptide: ER lumen protein-retaining receptor 2 (212 aa).

The Lumenal portion of the chain corresponds to 1–4 (MNIF). The chain crosses the membrane as a helical span at residues 5 to 24 (RLTGDLSHLAAIVILLLKIW). Residues 25 to 32 (KTRSCAGI) lie on the Cytoplasmic side of the membrane. A helical membrane pass occupies residues 33-52 (SGKSQLLFALVFTTRYLDLF). Residues 47-48 (RY) are interaction with the K-D-E-L motif on target proteins. Residues 53 to 58 (TSFISL) are Lumenal-facing. The chain crosses the membrane as a helical span at residues 59–79 (YNTSMKVIYLACSYATVYLIY). The Cytoplasmic portion of the chain corresponds to 80-92 (LKFKATYDGNHDT). Residues 93 to 110 (FRVEFLVVPVGGLSFLVN) traverse the membrane as a helical segment. Residues 111 to 116 (HDFSPL) lie on the Lumenal side of the membrane. The helical transmembrane segment at 117–135 (EILWTFSIYLESVAILPQL) threads the bilayer. Residues 136–149 (FMISKTGEAETITT) are Cytoplasmic-facing. The chain crosses the membrane as a helical span at residues 150–168 (HYLFFLGLYRALYLVNWIW). The interval 159–169 (RALYLVNWIWR) is interaction with the K-D-E-L motif on target proteins. The Lumenal portion of the chain corresponds to 169–178 (RFYFEGFFDL). A helical transmembrane segment spans residues 179-199 (IAVVAGVVQTILYCDFFYLYI). The Cytoplasmic portion of the chain corresponds to 200–212 (TKVLKGKKLSLPA). The interval 204-207 (KGKK) is important for recycling of cargo proteins with the sequence motif K-D-E-L from the Golgi to the endoplasmic reticulum.

It belongs to the ERD2 family.

It is found in the endoplasmic reticulum membrane. The protein resides in the golgi apparatus membrane. It localises to the cytoplasmic vesicle. Its subcellular location is the COPI-coated vesicle membrane. Functionally, membrane receptor that binds the K-D-E-L sequence motif in the C-terminal part of endoplasmic reticulum resident proteins and maintains their localization in that compartment by participating to their vesicle-mediated recycling back from the Golgi. Binding is pH dependent, and is optimal at pH 5-5.4. The polypeptide is ER lumen protein-retaining receptor 2 (KDELR2) (Homo sapiens (Human)).